Consider the following 230-residue polypeptide: UPF0173 metal-dependent hydrolase SPO2976 (230 aa).

It belongs to the UPF0173 family.

In Ruegeria pomeroyi (strain ATCC 700808 / DSM 15171 / DSS-3) (Silicibacter pomeroyi), this protein is UPF0173 metal-dependent hydrolase SPO2976.